We begin with the raw amino-acid sequence, 517 residues long: Putative thymidine phosphorylase (517 aa).

The protein belongs to the thymidine/pyrimidine-nucleoside phosphorylase family. Type 2 subfamily.

It catalyses the reaction thymidine + phosphate = 2-deoxy-alpha-D-ribose 1-phosphate + thymine. This Legionella pneumophila subsp. pneumophila (strain Philadelphia 1 / ATCC 33152 / DSM 7513) protein is Putative thymidine phosphorylase.